Reading from the N-terminus, the 137-residue chain is Putative pre-16S rRNA nuclease (137 aa).

The protein belongs to the YqgF nuclease family.

The protein localises to the cytoplasm. Its function is as follows. Could be a nuclease involved in processing of the 5'-end of pre-16S rRNA. This chain is Putative pre-16S rRNA nuclease, found in Desulforamulus reducens (strain ATCC BAA-1160 / DSM 100696 / MI-1) (Desulfotomaculum reducens).